We begin with the raw amino-acid sequence, 273 residues long: Dermonecrotic toxin LsaSicTox-alphaIB1ai (273 aa).

His5 is an active-site residue. Residues Glu25 and Asp27 each contribute to the Mg(2+) site. Residue His41 is the Nucleophile of the active site. Intrachain disulfides connect Cys45-Cys51 and Cys47-Cys190. Asp85 is a binding site for Mg(2+).

It belongs to the arthropod phospholipase D family. Class II subfamily. Mg(2+) is required as a cofactor. Expressed by the venom gland.

The protein localises to the secreted. The catalysed reaction is an N-(acyl)-sphingosylphosphocholine = an N-(acyl)-sphingosyl-1,3-cyclic phosphate + choline. It catalyses the reaction an N-(acyl)-sphingosylphosphoethanolamine = an N-(acyl)-sphingosyl-1,3-cyclic phosphate + ethanolamine. The enzyme catalyses a 1-acyl-sn-glycero-3-phosphocholine = a 1-acyl-sn-glycero-2,3-cyclic phosphate + choline. It carries out the reaction a 1-acyl-sn-glycero-3-phosphoethanolamine = a 1-acyl-sn-glycero-2,3-cyclic phosphate + ethanolamine. In terms of biological role, dermonecrotic toxins cleave the phosphodiester linkage between the phosphate and headgroup of certain phospholipids (sphingolipid and lysolipid substrates), forming an alcohol (often choline) and a cyclic phosphate. This toxin acts on sphingomyelin (SM). It may also act on ceramide phosphoethanolamine (CPE), lysophosphatidylcholine (LPC) and lysophosphatidylethanolamine (LPE), but not on lysophosphatidylserine (LPS), and lysophosphatidylglycerol (LPG). It acts by transphosphatidylation, releasing exclusively cyclic phosphate products as second products. Induces dermonecrosis, hemolysis, increased vascular permeability, edema, inflammatory response, and platelet aggregation. The chain is Dermonecrotic toxin LsaSicTox-alphaIB1ai from Loxosceles sabina (Tucson recluse spider).